A 393-amino-acid chain; its full sequence is Formate-dependent phosphoribosylglycinamide formyltransferase (393 aa).

N(1)-(5-phospho-beta-D-ribosyl)glycinamide-binding positions include 22–23 (EL) and glutamate 82. ATP-binding positions include arginine 114, lysine 155, 160–165 (SSGKGQ), 195–198 (EGFI), and glutamate 203. The 190-residue stretch at 119 to 308 (RLAAEELKLP…QFALHARAIL (190 aa)) folds into the ATP-grasp domain. Mg(2+) contacts are provided by glutamate 267 and glutamate 279. N(1)-(5-phospho-beta-D-ribosyl)glycinamide-binding positions include aspartate 286, lysine 356, and 363–364 (RR).

It belongs to the PurK/PurT family. Homodimer.

The enzyme catalyses N(1)-(5-phospho-beta-D-ribosyl)glycinamide + formate + ATP = N(2)-formyl-N(1)-(5-phospho-beta-D-ribosyl)glycinamide + ADP + phosphate + H(+). It participates in purine metabolism; IMP biosynthesis via de novo pathway; N(2)-formyl-N(1)-(5-phospho-D-ribosyl)glycinamide from N(1)-(5-phospho-D-ribosyl)glycinamide (formate route): step 1/1. Involved in the de novo purine biosynthesis. Catalyzes the transfer of formate to 5-phospho-ribosyl-glycinamide (GAR), producing 5-phospho-ribosyl-N-formylglycinamide (FGAR). Formate is provided by PurU via hydrolysis of 10-formyl-tetrahydrofolate. The polypeptide is Formate-dependent phosphoribosylglycinamide formyltransferase (Pseudomonas syringae pv. syringae (strain B728a)).